The following is an 88-amino-acid chain: MKEGIHPEYREVVFMDVQTGNKFVTRSTIHTRETVEIDGKTYPLFKCDVTSESHPFYTGAQTRIVETGRVEKFRARFARTAGTVKSAS.

This sequence belongs to the bacterial ribosomal protein bL31 family. Type B subfamily. As to quaternary structure, part of the 50S ribosomal subunit.

This chain is Large ribosomal subunit protein bL31B, found in Bordetella pertussis (strain Tohama I / ATCC BAA-589 / NCTC 13251).